The sequence spans 231 residues: Ribonuclease HII (231 aa).

The region spanning 23 to 214 is the RNase H type-2 domain; the sequence is GPVAGVDEAG…VAKAHREWAL (192 aa). A divalent metal cation is bound by residues aspartate 29, glutamate 30, and aspartate 123.

This sequence belongs to the RNase HII family. Mn(2+) serves as cofactor. It depends on Mg(2+) as a cofactor.

It localises to the cytoplasm. The catalysed reaction is Endonucleolytic cleavage to 5'-phosphomonoester.. Functionally, endonuclease that specifically degrades the RNA of RNA-DNA hybrids. The sequence is that of Ribonuclease HII from Corynebacterium efficiens (strain DSM 44549 / YS-314 / AJ 12310 / JCM 11189 / NBRC 100395).